The primary structure comprises 719 residues: Glutathionylspermidine synthase (719 aa).

The Peptidase C51 domain occupies 54–200 (CLPLSSFERK…TESGEVELLD (147 aa)). R350 serves as a coordination point for glutathione. Position 350 to 352 (350 to 352 (RFD)) interacts with ATP. Residues D352, E364, and N366 each coordinate Mg(2+). Residue S369 coordinates glutathione. Residue E432 coordinates spermidine. The glutathione site is built by E433 and T501. ATP is bound by residues K544, K579, G586, Q653, and 689–691 (KIT).

In the C-terminal section; belongs to the glutathionylspermidine synthase preATP-grasp family. Requires Mg(2+) as cofactor. Post-translationally, the N-terminus is blocked.

It catalyses the reaction spermidine + glutathione + ATP = glutathionylspermidine + ADP + phosphate + H(+). Its function is as follows. Conjugates glutathione (gamma-Glu-Cys-Gly) and spermidine to form glutathionylspermidine in the biosynthesis trypanothione (N(1),N(8)-bis(glutathionyl)spermidine), which is involved in maintaining intracellular thiol redox and in defense against oxidants. This chain is Glutathionylspermidine synthase (GSP), found in Crithidia fasciculata.